Here is a 608-residue protein sequence, read N- to C-terminus: Glutamyl-tRNA(Gln) amidotransferase subunit E (608 aa).

The interval 401–428 (PEETRAANPDGTTRFLRPRPGAARMYPE) is disordered.

Belongs to the GatB/GatE family. GatE subfamily. In terms of assembly, heterodimer of GatD and GatE.

It carries out the reaction L-glutamyl-tRNA(Gln) + L-glutamine + ATP + H2O = L-glutaminyl-tRNA(Gln) + L-glutamate + ADP + phosphate + H(+). Its function is as follows. Allows the formation of correctly charged Gln-tRNA(Gln) through the transamidation of misacylated Glu-tRNA(Gln) in organisms which lack glutaminyl-tRNA synthetase. The reaction takes place in the presence of glutamine and ATP through an activated gamma-phospho-Glu-tRNA(Gln). The GatDE system is specific for glutamate and does not act on aspartate. The chain is Glutamyl-tRNA(Gln) amidotransferase subunit E from Pyrobaculum arsenaticum (strain DSM 13514 / JCM 11321 / PZ6).